Here is a 348-residue protein sequence, read N- to C-terminus: Histidinol-phosphate aminotransferase (348 aa).

The segment at 1-31 (MLPTRDCVRQTPAYTPGEQPQTAGFTKLNTN) is disordered. Over residues 18-31 (EQPQTAGFTKLNTN) the composition is skewed to polar residues. At lysine 207 the chain carries N6-(pyridoxal phosphate)lysine.

It belongs to the class-II pyridoxal-phosphate-dependent aminotransferase family. Histidinol-phosphate aminotransferase subfamily. As to quaternary structure, homodimer. Pyridoxal 5'-phosphate serves as cofactor.

It catalyses the reaction L-histidinol phosphate + 2-oxoglutarate = 3-(imidazol-4-yl)-2-oxopropyl phosphate + L-glutamate. It participates in amino-acid biosynthesis; L-histidine biosynthesis; L-histidine from 5-phospho-alpha-D-ribose 1-diphosphate: step 7/9. The polypeptide is Histidinol-phosphate aminotransferase (Microcystis aeruginosa (strain NIES-843 / IAM M-2473)).